Here is a 913-residue protein sequence, read N- to C-terminus: Cadherin-4 (913 aa).

The signal sequence occupies residues 1–19 (MRTGSRLLLVLLVWGSAAA). A propeptide spanning residues 20 to 166 (LNGDLTVRPT…SAKGLRRQKR (147 aa)) is cleaved from the precursor. Cadherin domains lie at 167–274 (DWVI…RPEF), 275–389 (INQV…PPEF), 390–504 (TTST…APYF), 505–610 (PTNH…DNAP), and 611–721 (ELLP…TIGA). The Extracellular segment spans residues 167–731 (DWVIPPINVP…VAAAGLGTGA (565 aa)). 6 N-linked (GlcNAc...) asparagine glycosylation sites follow: asparagine 280, asparagine 409, asparagine 554, asparagine 629, asparagine 658, and asparagine 699. A helical membrane pass occupies residues 732-753 (IIAILICIIILLTMVLLFVVWM). The Cytoplasmic portion of the chain corresponds to 754–913 (KRREKERHTK…ADMYGGGEED (160 aa)).

Embryonic brain and neuronal retina.

It localises to the cell membrane. Cadherins are calcium-dependent cell adhesion proteins. They preferentially interact with themselves in a homophilic manner in connecting cells; cadherins may thus contribute to the sorting of heterogeneous cell types. May play an important role in retinal development. This chain is Cadherin-4 (CDH4), found in Gallus gallus (Chicken).